Reading from the N-terminus, the 894-residue chain is Peroxisomal hydratase-dehydrogenase-epimerase (894 aa).

2 short-chain dehydrogenase like regions span residues 6–230 (RFDG…HKNN) and 311–523 (DFKG…CSDK). Positions 14, 53, 99, 132, 164, 168, and 197 each coordinate NADP(+). The active-site Proton acceptor is Y164. The Lowers pKa of active site Tyr role is filled by K168. The active-site Proton acceptor is Y458. Residues H693, G694, and K723 each coordinate (3R)-3-hydroxydecanoyl-CoA. The tract at residues 763–782 (KKPADRGASTAANKPPARSP) is disordered. The MaoC-like domain occupies 776-887 (KPPARSPDAV…VKETGKLAIS (112 aa)). (3R)-3-hydroxydecanoyl-CoA is bound by residues D803, N805, G826, F851, and G853.

Belongs to the short-chain dehydrogenases/reductases (SDR) family. Monomer.

The protein localises to the peroxisome. It carries out the reaction a (3R)-3-hydroxyacyl-CoA = a (2E)-enoyl-CoA + H2O. The catalysed reaction is a (3R)-3-hydroxyacyl-CoA + NAD(+) = a 3-oxoacyl-CoA + NADH + H(+). It functions in the pathway lipid metabolism; fatty acid beta-oxidation. Second trifunctional enzyme acting on the beta-oxidation pathway for fatty acids, possessing hydratase-dehydrogenase-epimerase activities. Converts trans-2-enoyl-CoA via D-3-hydroxyacyl-CoA to 3-ketoacyl-CoA. The protein is Peroxisomal hydratase-dehydrogenase-epimerase (fox-2) of Neurospora crassa (strain ATCC 24698 / 74-OR23-1A / CBS 708.71 / DSM 1257 / FGSC 987).